A 330-amino-acid polypeptide reads, in one-letter code: Aspartate--ammonia ligase (330 aa).

This sequence belongs to the class-II aminoacyl-tRNA synthetase family. AsnA subfamily.

The protein resides in the cytoplasm. It catalyses the reaction L-aspartate + NH4(+) + ATP = L-asparagine + AMP + diphosphate + H(+). The protein operates within amino-acid biosynthesis; L-asparagine biosynthesis; L-asparagine from L-aspartate (ammonia route): step 1/1. This is Aspartate--ammonia ligase from Streptococcus pneumoniae serotype 2 (strain D39 / NCTC 7466).